The chain runs to 524 residues: MVPQALLFVPLLVFPLCFGKFPIYTIPDKLGPWSPIDIHHLSCPNNLVVEDEGCTNLSGFSYMELKVGYISAIKMNGFTCTGVVTEAETYTNFVGYVTTTFKRKHFRPTPDACRAAYNWKMAGDPRYEESLHNPYPDYHWLRTVKTTKESLVIISPSVADLDPYDRSLHSRVFPGGNCSGVAVSSTYCSTNHDYTIWMPENPRLGMSCDIFTNSRGKRASKGSETCGFVDERGLYKSLKGACKLKLCGVLGLRLMDGTWVAMQTSNETKWCPPGQLVNLHDFRSDEIEHLVVEELVKKREECLDALESIMTTKSVSFRRLSHLRKLVPGFGKAYTIFNKTLMEADAHYKSVRTWNEIIPSKGCLRVGGRCHPHVNGVFFNGIILGPDGNVLIPEMQSSLLQQHMELLVSSVIPLMHPLADPSTVFKNGDEAEDFVEVHLPDVHERISGVDLGLPNWGKYVLLSAGALTALMLIIFLMTCWRRVNRSEPTQHNLRGTGREVSVTPQSGKIISSWESYKSGGETGL.

The N-terminal stretch at 1 to 19 is a signal peptide; it reads MVPQALLFVPLLVFPLCFG. Residues 20–459 lie on the Virion surface side of the membrane; that stretch reads KFPIYTIPDK…DLGLPNWGKY (440 aa). 6 disulfides stabilise this stretch: Cys43–Cys302, Cys54–Cys226, Cys80–Cys113, Cys178–Cys188, Cys208–Cys247, and Cys242–Cys271. N-linked (GlcNAc...) asparagine; by host glycosylation is present at Asn56. N-linked (GlcNAc...) asparagine; by host glycans are attached at residues Asn266 and Asn338. The cysteines at positions 363 and 370 are disulfide-linked. The chain crosses the membrane as a helical span at residues 460-480; the sequence is VLLSAGALTALMLIIFLMTCW. Cys479 is lipidated: S-palmitoyl cysteine; by host. The Intravirion segment spans residues 481–524; the sequence is RRVNRSEPTQHNLRGTGREVSVTPQSGKIISSWESYKSGGETGL.

This sequence belongs to the lyssavirus glycoprotein family. In terms of assembly, homotrimer. Interacts with matrix protein. Interacts with host TRFC. Interacts with host BST2; this interaction inhibits viral budding by tethering new virions to the cell surface. Interacts with host ITGB1. Interacts with host GRM2. In terms of processing, glycosylated and palmitoylated by host. Glycosylation is crucial for glycoprotein export at the cell surface.

The protein localises to the virion membrane. Attaches the virus to host cellular receptor, inducing endocytosis of the virion by using different host proteins including TFRC, GRM2 and ITGB1. In the endosome, the acidic pH induces conformational changes in the glycoprotein trimer, which trigger fusion between virus and cell membrane. There is convincing in vitro evidence that the muscular form of the nicotinic acetylcholine receptor (nAChR), the neuronal cell adhesion molecule (NCAM), and the p75 neurotrophin receptor (p75NTR) bind glycoprotein and thereby facilitate rabies virus entry into cells. The sequence is that of Glycoprotein (G) from Homo sapiens (Human).